The sequence spans 335 residues: Holliday junction branch migration complex subunit RuvB (335 aa).

Positions 1-183 are large ATPase domain (RuvB-L); that stretch reads MDERIISSET…FGVIDHLEFY (183 aa). ATP is bound by residues Leu-22, Arg-23, Gly-64, Lys-67, Thr-68, Thr-69, 130–132, Arg-173, Tyr-183, and Arg-220; that span reads EDY. Thr-68 contacts Mg(2+). Positions 184 to 254 are small ATPAse domain (RuvB-S); it reads TEEQLTEIVL…LAKEALTLLQ (71 aa). A head domain (RuvB-H) region spans residues 257-335; that stretch reads PRGLDTIDQK…HLGISYEKEV (79 aa). Residues Arg-293, Arg-312, and Arg-317 each contribute to the DNA site.

The protein belongs to the RuvB family. In terms of assembly, homohexamer. Forms an RuvA(8)-RuvB(12)-Holliday junction (HJ) complex. HJ DNA is sandwiched between 2 RuvA tetramers; dsDNA enters through RuvA and exits via RuvB. An RuvB hexamer assembles on each DNA strand where it exits the tetramer. Each RuvB hexamer is contacted by two RuvA subunits (via domain III) on 2 adjacent RuvB subunits; this complex drives branch migration. In the full resolvosome a probable DNA-RuvA(4)-RuvB(12)-RuvC(2) complex forms which resolves the HJ.

It is found in the cytoplasm. It catalyses the reaction ATP + H2O = ADP + phosphate + H(+). Its function is as follows. The RuvA-RuvB-RuvC complex processes Holliday junction (HJ) DNA during genetic recombination and DNA repair, while the RuvA-RuvB complex plays an important role in the rescue of blocked DNA replication forks via replication fork reversal (RFR). RuvA specifically binds to HJ cruciform DNA, conferring on it an open structure. The RuvB hexamer acts as an ATP-dependent pump, pulling dsDNA into and through the RuvAB complex. RuvB forms 2 homohexamers on either side of HJ DNA bound by 1 or 2 RuvA tetramers; 4 subunits per hexamer contact DNA at a time. Coordinated motions by a converter formed by DNA-disengaged RuvB subunits stimulates ATP hydrolysis and nucleotide exchange. Immobilization of the converter enables RuvB to convert the ATP-contained energy into a lever motion, pulling 2 nucleotides of DNA out of the RuvA tetramer per ATP hydrolyzed, thus driving DNA branch migration. The RuvB motors rotate together with the DNA substrate, which together with the progressing nucleotide cycle form the mechanistic basis for DNA recombination by continuous HJ branch migration. Branch migration allows RuvC to scan DNA until it finds its consensus sequence, where it cleaves and resolves cruciform DNA. This chain is Holliday junction branch migration complex subunit RuvB, found in Listeria monocytogenes serotype 4b (strain CLIP80459).